The following is a 225-amino-acid chain: uncharacterized protein (225 aa).

Residues Asn48, Asn58, Asn105, and Asn108 are each glycosylated (N-linked (GlcNAc...) asparagine; by host). A helical transmembrane segment spans residues 156 to 178 (LWGYLKQPLVMVGIAAVVGYLIY).

The protein belongs to the ascovirus HvAv ORF58 family.

Its subcellular location is the membrane. This is an uncharacterized protein from Heliothis virescens ascovirus 3e (HvAV-3e).